Reading from the N-terminus, the 63-residue chain is Large ribosomal subunit protein uL29 (63 aa).

It belongs to the universal ribosomal protein uL29 family.

The protein is Large ribosomal subunit protein uL29 of Actinobacillus pleuropneumoniae serotype 5b (strain L20).